A 75-amino-acid chain; its full sequence is UPF0352 protein VP2129 (75 aa).

Belongs to the UPF0352 family.

In Vibrio parahaemolyticus serotype O3:K6 (strain RIMD 2210633), this protein is UPF0352 protein VP2129.